Reading from the N-terminus, the 438-residue chain is Exosome complex component RRP45B (438 aa).

2 disordered regions span residues 293–322 and 334–438; these read PTLA…RAAE and STEE…KNKS. Basic and acidic residues-rich tracts occupy residues 307 to 322 and 334 to 347; these read VKEE…RAAE and STEE…EEAA. Over residues 380-394 the composition is skewed to polar residues; sequence TKSSSTKKMNGSGNA. The segment covering 410 to 429 has biased composition (basic and acidic residues); the sequence is LGKKDTKHKDGEMTLKDAVK.

This sequence belongs to the RNase PH family.

The protein localises to the cytoplasm. The protein resides in the nucleus. Its function is as follows. Probable 3'-&gt;5' exoribonuclease involved in the regulation of cuticular wax biosynthesis by controlling the expression of CER3. May act by degrading a specific mRNA species encoding a negative regulator of CER3 transcription. Can perform exosomal functions and complement the yeast rrp45 null mutant. This Arabidopsis thaliana (Mouse-ear cress) protein is Exosome complex component RRP45B.